Consider the following 147-residue polypeptide: 3-dehydroquinate dehydratase (147 aa).

The active-site Proton acceptor is the Tyr23. Residues Asn74, His80, and Asp87 each contribute to the substrate site. The Proton donor role is filled by His100. Residues 101 to 102 and Arg111 contribute to the substrate site; that span reads LS.

The protein belongs to the type-II 3-dehydroquinase family. As to quaternary structure, homododecamer.

It catalyses the reaction 3-dehydroquinate = 3-dehydroshikimate + H2O. It participates in metabolic intermediate biosynthesis; chorismate biosynthesis; chorismate from D-erythrose 4-phosphate and phosphoenolpyruvate: step 3/7. Its function is as follows. Catalyzes a trans-dehydration via an enolate intermediate. This chain is 3-dehydroquinate dehydratase, found in Clostridium botulinum (strain 657 / Type Ba4).